The primary structure comprises 184 residues: ATP synthase subunit b, chloroplastic (184 aa).

Residues 26–48 traverse the membrane as a helical segment; sequence ILATNLINLSVVLGVLIFFGKGV.

It belongs to the ATPase B chain family. In terms of assembly, F-type ATPases have 2 components, F(1) - the catalytic core - and F(0) - the membrane proton channel. F(1) has five subunits: alpha(3), beta(3), gamma(1), delta(1), epsilon(1). F(0) has four main subunits: a(1), b(1), b'(1) and c(10-14). The alpha and beta chains form an alternating ring which encloses part of the gamma chain. F(1) is attached to F(0) by a central stalk formed by the gamma and epsilon chains, while a peripheral stalk is formed by the delta, b and b' chains.

The protein localises to the plastid. It is found in the chloroplast thylakoid membrane. In terms of biological role, f(1)F(0) ATP synthase produces ATP from ADP in the presence of a proton or sodium gradient. F-type ATPases consist of two structural domains, F(1) containing the extramembraneous catalytic core and F(0) containing the membrane proton channel, linked together by a central stalk and a peripheral stalk. During catalysis, ATP synthesis in the catalytic domain of F(1) is coupled via a rotary mechanism of the central stalk subunits to proton translocation. Functionally, component of the F(0) channel, it forms part of the peripheral stalk, linking F(1) to F(0). This is ATP synthase subunit b, chloroplastic from Calycanthus floridus var. glaucus (Eastern sweetshrub).